A 174-amino-acid polypeptide reads, in one-letter code: Nucleoside-triphosphatase THEP1 (174 aa).

ATP is bound by residues 7–14 and 94–101; these read GRPGVGKT and LIIVDEIG.

It belongs to the THEP1 NTPase family.

The catalysed reaction is a ribonucleoside 5'-triphosphate + H2O = a ribonucleoside 5'-diphosphate + phosphate + H(+). Has nucleotide phosphatase activity towards ATP, GTP, CTP, TTP and UTP. May hydrolyze nucleoside diphosphates with lower efficiency. The polypeptide is Nucleoside-triphosphatase THEP1 (Thermotoga maritima (strain ATCC 43589 / DSM 3109 / JCM 10099 / NBRC 100826 / MSB8)).